We begin with the raw amino-acid sequence, 711 residues long: Ribosomal RNA large subunit methyltransferase K/L (711 aa).

In terms of domain architecture, THUMP spans 43–154 (LAYRITLWTR…NGVITIAMNF (112 aa)).

The protein belongs to the methyltransferase superfamily. RlmKL family.

The protein localises to the cytoplasm. The enzyme catalyses guanosine(2445) in 23S rRNA + S-adenosyl-L-methionine = N(2)-methylguanosine(2445) in 23S rRNA + S-adenosyl-L-homocysteine + H(+). The catalysed reaction is guanosine(2069) in 23S rRNA + S-adenosyl-L-methionine = N(2)-methylguanosine(2069) in 23S rRNA + S-adenosyl-L-homocysteine + H(+). Specifically methylates the guanine in position 2445 (m2G2445) and the guanine in position 2069 (m7G2069) of 23S rRNA. The protein is Ribosomal RNA large subunit methyltransferase K/L of Shewanella oneidensis (strain ATCC 700550 / JCM 31522 / CIP 106686 / LMG 19005 / NCIMB 14063 / MR-1).